Reading from the N-terminus, the 1180-residue chain is RecBCD enzyme subunit RecB (1180 aa).

The UvrD-like helicase ATP-binding domain maps to 2-450 (SDVAETLDPL…YTLDTNWRSA (449 aa)). The segment at 2–853 (SDVAETLDPL…KGEPQDAAGL (852 aa)) is ATPase, DNA-binding and helicase activity, interacts with RecC. 23–30 (ASAGTGKT) serves as a coordination point for ATP. The DNA-binding element occupies 252-254 (IDR). Trp-447 provides a ligand contact to ATP. The UvrD-like helicase C-terminal domain occupies 480 to 746 (SAGKNQALRF…QIVTIHKSKG (267 aa)). 3 DNA-binding regions span residues 511–512 (VG), 560–561 (SR), and Arg-761. Residues 900 to 1180 (NWRVTSYSGL…MFAGMTLEEA (281 aa)) form a nuclease activity, interacts with RecD and RecA region. Mg(2+) contacts are provided by His-956, Asp-1067, Asp-1080, and Tyr-1081. Asp-1080 serves as the catalytic For nuclease activity.

This sequence belongs to the helicase family. UvrD subfamily. As to quaternary structure, heterotrimer of RecB, RecC and RecD. All subunits contribute to DNA-binding. The C-terminus interacts with RecA. Interacts with YgbT (Cas1). In terms of assembly, (Microbial infection) Lambda virus GamS protein interacts with the enzyme without displacing any of the subunits. Mg(2+) is required as a cofactor.

The enzyme catalyses Exonucleolytic cleavage (in the presence of ATP) in either 5'- to 3'- or 3'- to 5'-direction to yield 5'-phosphooligonucleotides.. The catalysed reaction is Couples ATP hydrolysis with the unwinding of duplex DNA by translocating in the 3'-5' direction.. It carries out the reaction ATP + H2O = ADP + phosphate + H(+). Its activity is regulated as follows. After reacting with DNA bearing a Chi site the holoenzyme is disassembled and loses exonuclease activity, DNA unwinding and Chi-directed DNA cleavage; RecB remains complexed with ssDNA, which may prevent holoenzyme reassembly. High levels of Mg(2+) (13 mM MgCl(2+)) or incubation with DNase allows holoenzyme reassembly, suggesting it is DNA bound to RecB that prevents reassembly. With respect to regulation, (Microbial infection) RecBCD is inhibited by the lambda virus gam protein (both GamL and GamS isoforms); in vitro a short preincubation prior to adding DNA results in maximal inhibition. In terms of biological role, a helicase/nuclease that prepares dsDNA breaks (DSB) for recombinational DNA repair. Binds to DSBs and unwinds DNA via a rapid (&gt;1 kb/second) and highly processive (&gt;30 kb) ATP-dependent bidirectional helicase. Unwinds dsDNA until it encounters a Chi (crossover hotspot instigator, 5'-GCTGGTGG-3') sequence from the 3' direction. Cuts ssDNA a few nucleotides 3' to Chi site, by nicking one strand or switching the strand degraded (depending on the reaction conditions). The properties and activities of the enzyme are changed at Chi. The Chi-altered holoenzyme produces a long 3'-ssDNA overhang which facilitates RecA-binding to the ssDNA for homologous DNA recombination and repair. Holoenzyme degrades any linearized DNA that is unable to undergo homologous recombination. In the holoenzyme this subunit contributes ATPase, 3'-5' helicase, exonuclease activity and loads RecA onto ssDNA. The RecBC complex requires the RecD subunit for nuclease activity, but can translocate along ssDNA in both directions. The RecBCD complex does not unwind G-quadruplex DNA. Probably interacts with a component of retron Ec48 which moniters RecBCD stability; when RecB is missing or impaired the retron is activated and becomes toxic. The chain is RecBCD enzyme subunit RecB from Escherichia coli (strain K12).